Consider the following 277-residue polypeptide: Inositol monophosphatase 1 (277 aa).

Glu-70, Asp-90, Ile-92, and Asp-93 together coordinate Mg(2+). Residues Glu-70, 90–95, 194–196, Glu-213, and Asp-220 each bind substrate; these read DPIDGT and GTA. Asp-220 is a binding site for Mg(2+).

The protein belongs to the inositol monophosphatase superfamily. In terms of assembly, homodimer. Mg(2+) is required as a cofactor. Mostly expressed in brain, small intestine, testis, kidney, and spleen (at protein level).

It localises to the cytoplasm. The catalysed reaction is a myo-inositol phosphate + H2O = myo-inositol + phosphate. The enzyme catalyses 1D-myo-inositol 1-phosphate + H2O = myo-inositol + phosphate. It carries out the reaction 1D-myo-inositol 2-phosphate + H2O = myo-inositol + phosphate. It catalyses the reaction 1D-myo-inositol 3-phosphate + H2O = myo-inositol + phosphate. The catalysed reaction is 1D-myo-inositol 4-phosphate + H2O = myo-inositol + phosphate. The enzyme catalyses 1D-myo-inositol 5-phosphate + H2O = myo-inositol + phosphate. It carries out the reaction 1D-myo-inositol 6-phosphate + H2O = myo-inositol + phosphate. It catalyses the reaction scyllo-inositol 1-phosphate + H2O = scyllo-inositol + phosphate. The catalysed reaction is alpha-D-galactose 1-phosphate + H2O = D-galactose + phosphate. The enzyme catalyses alpha-D-glucose 1-phosphate + H2O = D-glucose + phosphate. It carries out the reaction D-glucose 6-phosphate + H2O = D-glucose + phosphate. It catalyses the reaction beta-D-fructose 1-phosphate + H2O = D-fructose + phosphate. The catalysed reaction is glycerol 2-phosphate + H2O = glycerol + phosphate. The enzyme catalyses adenosine 2'-phosphate + H2O = adenosine + phosphate. The protein operates within polyol metabolism; myo-inositol biosynthesis; myo-inositol from D-glucose 6-phosphate: step 2/2. With respect to regulation, inhibited by Li(+), Ca(2+) and Mn(2+), but also by Mg(2+) at concentrations above 3 mM. Functionally, phosphatase involved in the dephosphorylation of myo-inositol monophosphate to generate myo-inositol. Is also able to dephosphorylate scyllo-inositol-phosphate, myo-inositol 1,4-diphosphate, scyllo-inositol-1,3-diphosphate and scyllo-inositol-1,4-diphosphate. Also dephosphorylates in vitro other sugar-phosphates including D-galactose-1-phosphate, glucose-1-phosphate, glucose-6-phosphate, fructose-1-phosphate, beta-glycerophosphate and 2'-AMP. Responsible for the provision of inositol required for synthesis of phosphatidylinositol and polyphosphoinositides, and involved in maintaining normal brain function. Has been implicated as the pharmacological target for lithium Li(+) action in brain. The protein is Inositol monophosphatase 1 (Impa1) of Mus musculus (Mouse).